The chain runs to 67 residues: Conotoxin Cl6.6a (67 aa).

An N-terminal signal peptide occupies residues 1 to 24; that stretch reads MKLTCVLIAAVLLLAVCQLDSADA. Positions 25-37 are excised as a propeptide; that stretch reads TGYMRKNPSLRSP. Intrachain disulfides connect Cys43–Cys57, Cys50–Cys61, and Cys56–Cys65.

This sequence belongs to the conotoxin O1 superfamily. As to expression, expressed by the venom duct.

Its subcellular location is the secreted. This chain is Conotoxin Cl6.6a, found in Californiconus californicus (California cone).